The primary structure comprises 127 residues: Multifunctional methyltransferase subunit trm112 (127 aa).

Residues 2–123 form the TRM112 domain; the sequence is KVMTLNFLTC…KNGVANFLLP (122 aa).

The protein belongs to the TRM112 family. Heterodimer of mtq2-rmt-1/trm112, forming the eRF1 methyltransferase. Rmt-1/trm112 is necessary for the solubility and activity of the catalytic subunit mtq2. Interacts with trm11; required for full tRNA methyltransferase activity. Interacts with bud23; required for full rRNA methyltransferase activity.

It is found in the cytoplasm. It localises to the nucleus. In terms of biological role, acts as an activator of both rRNA/tRNA and protein methyltransferases. Together with methyltransferase mtq2, required for the methylation of eRF1 on 'Gln-182'. Together with methyltransferase trm11, required for the formation of 2-methylguanosine at position 10 (m2G10) in tRNA. Together with methyltransferase bud23, required for the formation of a 7-methylguanine in 18S rRNA. Involved in biogenesis of both 40S and 60S ribosomal subunits. This chain is Multifunctional methyltransferase subunit trm112 (rmt-1), found in Neurospora crassa (strain ATCC 24698 / 74-OR23-1A / CBS 708.71 / DSM 1257 / FGSC 987).